The chain runs to 380 residues: Cell division protein ZipA (380 aa).

Topologically, residues 1 to 7 are periplasmic; the sequence is MEDNFRN. A helical transmembrane segment spans residues 8-28; sequence VLIILSAIVITAIFIHGLWTL. The Cytoplasmic portion of the chain corresponds to 29 to 380; that stretch reads RKQKNPYKLK…DRKSRIALVE (352 aa).

It belongs to the ZipA family. Interacts with FtsZ via their C-terminal domains.

The protein resides in the cell inner membrane. In terms of biological role, essential cell division protein that stabilizes the FtsZ protofilaments by cross-linking them and that serves as a cytoplasmic membrane anchor for the Z ring. Also required for the recruitment to the septal ring of downstream cell division proteins. The polypeptide is Cell division protein ZipA (Colwellia psychrerythraea (strain 34H / ATCC BAA-681) (Vibrio psychroerythus)).